The chain runs to 328 residues: MAMNYSAKDEVDGGPTGPPGGAAKTRRPDNTAFKQQRLPAWQPILTAGTVLPTFFIIGLIFIPIGIGIFVTSNNIREIEGNVFMYYGLSNFYQNHRRYVKSRDDSQLNGDPSALLNPSKECEPYRRNEDKPIAPCGAIANSMFNDTLELFLVANESDPKPVPILLKKKGIAWWTDKNVKFRNPPGKDSLQEKFKDTTKPVNWHKPVYELDPDDESNNGFINEDFIVWMRTAALPTFRKLYRLIERTDDLHPTLPAGQYYLNITYNYPVHFFDGRKRMILSTISWMGGKNPFLGIAYITIGSISFLLGVVLLVINHKYRNSSNTADITI.

Positions 1-28 (MAMNYSAKDEVDGGPTGPPGGAAKTRRP) are disordered. Ala-2 carries the N-acetylalanine modification. The required for ATPase and aminophospholipid flippase activity stretch occupies residues 2–48 (AMNYSAKDEVDGGPTGPPGGAAKTRRPDNTAFKQQRLPAWQPILTAG). The Cytoplasmic segment spans residues 2 to 49 (AMNYSAKDEVDGGPTGPPGGAAKTRRPDNTAFKQQRLPAWQPILTAGT). The interaction with ATP8A2 stretch occupies residues 49 to 315 (TVLPTFFIIG…LGVVLLVINH (267 aa)). The chain crosses the membrane as a helical span at residues 50-70 (VLPTFFIIGLIFIPIGIGIFV). Residues 71 to 292 (TSNNIREIEG…SWMGGKNPFL (222 aa)) lie on the Exoplasmic loop side of the membrane. The segment at 102–125 (RDDSQLNGDPSALLNPSKECEPYR) is disordered. Cys-121 and Cys-135 are joined by a disulfide. N-linked (GlcNAc...) asparagine glycans are attached at residues Asn-144 and Asn-261. A helical membrane pass occupies residues 293–313 (GIAYITIGSISFLLGVVLLVI). The Cytoplasmic portion of the chain corresponds to 314 to 328 (NHKYRNSSNTADITI).

It belongs to the CDC50/LEM3 family. As to quaternary structure, component of various P4-ATPase flippase complexes which consists of a catalytic alpha subunit and an accessory beta subunit. Interacts with ATP8A1 to form a flippase complex; this complex forms an intermediate phosphoenzyme. Interacts with ATP8A2 to form a flippase complex. TP8B1:TMEM30A and ATP8B2:TMEM30A flippase complexes have been shown to form intermediate phosphoenzymes in vitro. Interacts with alpha subunits ATP8A1, ATP8B1, ATP8B2, ATP8B4, ATP10A, ATP10B, ATP10D, ATP11A, ATP11B and ATP11C. In terms of processing, N-glycosylated. Contains high mannose-type oligosaccharides.

Its subcellular location is the membrane. The protein localises to the golgi apparatus. It localises to the cytoplasmic vesicle. It is found in the secretory vesicle membrane. The protein resides in the apical cell membrane. Its subcellular location is the photoreceptor inner segment. The protein localises to the cell projection. It localises to the cilium. It is found in the photoreceptor outer segment. In terms of biological role, accessory component of a P4-ATPase flippase complex which catalyzes the hydrolysis of ATP coupled to the transport of aminophospholipids from the outer to the inner leaflet of various membranes and ensures the maintenance of asymmetric distribution of phospholipids. Phospholipid translocation also seems to be implicated in vesicle formation and in uptake of lipid signaling molecules. The beta subunit may assist in binding of the phospholipid substrate. Required for the proper folding, assembly and ER to Golgi exit of the ATP8A2:TMEM30A flippase complex. ATP8A2:TMEM30A may be involved in regulation of neurite outgrowth, and, reconstituted to liposomes, predomiminantly transports phosphatidylserine (PS) and to a lesser extent phosphatidylethanolamine (PE). The ATP8A1:TMEM30A flippase complex seems to play a role in regulation of cell migration probably involving flippase-mediated translocation of phosphatidylethanolamine (PE) at the plasma membrane. Required for the formation of the ATP8A2, ATP8B1 and ATP8B2 P-type ATPAse intermediate phosphoenzymes. Involved in uptake of platelet-activating factor (PAF). Can also mediate the export of alpha subunits ATP8A1, ATP8B1, ATP8B2, ATP8B4, ATP10A, ATP10B, ATP10D, ATP11A, ATP11B and ATP11C from ER to other membrane localizations. This is Cell cycle control protein 50A from Rattus norvegicus (Rat).